The following is a 378-amino-acid chain: Protein FAM170B (378 aa).

Disordered stretches follow at residues 1-56 (MKHH…LPDD), 244-265 (TRDQ…DSSE), and 277-378 (QQQP…QQGK). Low complexity-rich tracts occupy residues 277 to 339 (QQQP…QPLQ) and 349 to 378 (PQKQ…QQGK).

The protein belongs to the FAM170 family. In terms of assembly, interacts with GOPC. Exclusively expressed in adult testis (at protein level). Expression first started at postnatal week 3 in round spermatids, elongated spermatids and mature sperm.

It is found in the cytoplasmic vesicle. Its subcellular location is the secretory vesicle. The protein resides in the acrosome. The protein localises to the acrosome outer membrane. Functionally, plays a role in fertilization through the acrosome reaction. This Mus musculus (Mouse) protein is Protein FAM170B.